We begin with the raw amino-acid sequence, 299 residues long: Prohibitin-2 (299 aa).

Alanine 2 bears the N-acetylalanine mark. The segment at 19-49 (MGTALKLLLGAGAVAYGIRESVFTVEGGHRA) is necessary for transcriptional repression. At tyrosine 128 the chain carries Phosphotyrosine. Lysine 147 is subject to N6-acetyllysine. The necessary for transcriptional repression stretch occupies residues 150 to 174 (ASQLITQRAQVSLLIRRELTERAKD). Serine 151 is modified (phosphoserine). Residues 190 to 238 (SREYTAAVEAKQVAQQEAQRAQFLVEKAKQEQRQKIVQAEGEAEAARML) are a coiled coil. Residues lysine 200, lysine 250, and lysine 262 each carry the N6-acetyllysine modification.

This sequence belongs to the prohibitin family. As to quaternary structure, the mitochondrial prohibitin complex consists of two subunits (PHB1 and PHB2), assembled into a membrane-associated ring-shaped supercomplex of approximately 1 mDa. Interacts with ESR1, HDAC1 and HDAC5. Interacts with ZNF703. Interacts with STOML2. Interacts with ARFGEF3. Interacts with SPHK2. Interacts with COX4I1; the interaction associates PHB2 with COX. Interacts with MAP1LC3B (membrane-bound form LC3-II); the interaction is direct and upon mitochondrial depolarization and proteasome-dependent outer membrane rupture. Interacts with IGFBP6 (via C-terminal domain). Interacts with CLPB. Interacts with CD86 (via cytoplasmic domain); the interactions increases after priming with CD40. Interacts with AFG3L2. Interacts with DNAJC19. Interacts with AKT2; this interaction may be important for myogenic differentiation. Post-translationally, phosphorylated. Tyrosine phosphorylation is indirectly stimulated by IGFBP6.

The protein localises to the mitochondrion inner membrane. It localises to the cytoplasm. Its subcellular location is the nucleus. It is found in the cell membrane. Protein with pleiotropic attributes mediated in a cell-compartment- and tissue-specific manner, which include the plasma membrane-associated cell signaling functions, mitochondrial chaperone, and transcriptional co-regulator of transcription factors and sex steroid hormones in the nucleus. Functionally, in the mitochondria, together with PHB, forms large ring complexes (prohibitin complexes) in the inner mitochondrial membrane (IMM) and functions as a chaperone protein that stabilizes mitochondrial respiratory enzymes and maintains mitochondrial integrity in the IMM, which is required for mitochondrial morphogenesis, neuronal survival, and normal lifespan. The prohibitin complex, with DNAJC19, regulates cardiolipin remodeling and the protein turnover of OMA1 in a cardiolipin-binding manner. Also regulates cytochrome-c oxidase assembly (COX) and mitochondrial respiration. Binding to sphingoid 1-phosphate (SPP) modulates its regulator activity. Has a key role of mitophagy receptor involved in targeting mitochondria for autophagic degradation. Involved in mitochondrial-mediated antiviral innate immunity, activates RIG-I-mediated signal transduction and production of IFNB1 and pro-inflammatory cytokine IL6. In terms of biological role, in the nucleus, serves as transcriptional co-regulator. Acts as a mediator of transcriptional repression by nuclear hormone receptors via recruitment of histone deacetylases. Functions as an estrogen receptor (ER)-selective coregulator that potentiates the inhibitory activities of antiestrogens and represses the activity of estrogens. Competes with NCOA1 for modulation of ER transcriptional activity. Its function is as follows. In the plasma membrane, is involved in IGFBP6-induced cell migration. Cooperates with CD86 to mediate CD86-signaling in B lymphocytes that regulates the level of IgG1 produced through the activation of distal signaling intermediates. Upon CD40 engagement, required to activate NF-kappa-B signaling pathway via phospholipase C and protein kinase C activation. This Bos taurus (Bovine) protein is Prohibitin-2 (PHB2).